The following is a 253-amino-acid chain: Ribonuclease HII (253 aa).

Positions 70-253 (NLIAGIDEVG…KSFEPIKSML (184 aa)) constitute an RNase H type-2 domain. A divalent metal cation-binding residues include aspartate 76, glutamate 77, and aspartate 168.

Belongs to the RNase HII family. Mn(2+) serves as cofactor. Requires Mg(2+) as cofactor.

The protein resides in the cytoplasm. The catalysed reaction is Endonucleolytic cleavage to 5'-phosphomonoester.. Functionally, endonuclease that specifically degrades the RNA of RNA-DNA hybrids. The polypeptide is Ribonuclease HII (Streptococcus agalactiae serotype Ia (strain ATCC 27591 / A909 / CDC SS700)).